Here is a 370-residue protein sequence, read N- to C-terminus: Small ribosomal subunit biogenesis GTPase RsgA 1 (370 aa).

Residues 97 to 255 (QTQLDRPPIA…LADTPGFNQP (159 aa)) enclose the CP-type G domain. GTP contacts are provided by residues 146–149 (NKSD) and 197–205 (GPSGVGKSS). 4 residues coordinate Zn(2+): Cys280, Cys285, His287, and Cys293. The segment at 325-370 (PESTLKLKTKGKGQSQYEPKLESKKYRRTSRRTQVQGLQDLYQEEE) is disordered.

This sequence belongs to the TRAFAC class YlqF/YawG GTPase family. RsgA subfamily. Monomer. Associates with 30S ribosomal subunit, binds 16S rRNA. Zn(2+) is required as a cofactor.

The protein localises to the cytoplasm. Functionally, one of several proteins that assist in the late maturation steps of the functional core of the 30S ribosomal subunit. Helps release RbfA from mature subunits. May play a role in the assembly of ribosomal proteins into the subunit. Circularly permuted GTPase that catalyzes slow GTP hydrolysis, GTPase activity is stimulated by the 30S ribosomal subunit. The polypeptide is Small ribosomal subunit biogenesis GTPase RsgA 1 (Nostoc sp. (strain PCC 7120 / SAG 25.82 / UTEX 2576)).